The chain runs to 91 residues: Small ribosomal subunit protein bS20 (91 aa).

A compositionally biased stretch (basic and acidic residues) spans 1–21 (MPLHKSAEKRLRQAARRNERN). A disordered region spans residues 1–24 (MPLHKSAEKRLRQAARRNERNRAR).

This sequence belongs to the bacterial ribosomal protein bS20 family.

Its function is as follows. Binds directly to 16S ribosomal RNA. This is Small ribosomal subunit protein bS20 from Chlorobaculum parvum (strain DSM 263 / NCIMB 8327) (Chlorobium vibrioforme subsp. thiosulfatophilum).